The primary structure comprises 208 residues: Uracil phosphoribosyltransferase (208 aa).

5-phospho-alpha-D-ribose 1-diphosphate is bound by residues Arg78, Arg103, and 130–138; that span reads DPMLATGGS. Residues Ile193 and 198–200 each bind uracil; that span reads GDA. Residue Asp199 coordinates 5-phospho-alpha-D-ribose 1-diphosphate.

The protein belongs to the UPRTase family. The cofactor is Mg(2+).

The enzyme catalyses UMP + diphosphate = 5-phospho-alpha-D-ribose 1-diphosphate + uracil. The protein operates within pyrimidine metabolism; UMP biosynthesis via salvage pathway; UMP from uracil: step 1/1. Its activity is regulated as follows. Allosterically activated by GTP. Functionally, catalyzes the conversion of uracil and 5-phospho-alpha-D-ribose 1-diphosphate (PRPP) to UMP and diphosphate. This is Uracil phosphoribosyltransferase from Aliivibrio salmonicida (strain LFI1238) (Vibrio salmonicida (strain LFI1238)).